The primary structure comprises 214 residues: UPF0690 protein C1orf52 homolog (214 aa).

2 disordered regions span residues 1-66 and 81-214; these read MSDE…SVSK and DSRA…QCLD. Residues 32–44 show a composition bias toward low complexity; that stretch reads PEATASSAPAEPQ. Basic and acidic residues-rich tracts occupy residues 49-61 and 81-97; these read RAAE…DELF and DSRA…EFKV. Acidic residues predominate over residues 152–165; it reads EEEEEEQQPDSDDD. Serine 162 is subject to Phosphoserine. Composition is skewed to basic and acidic residues over residues 179 to 192 and 200 to 214; these read VETF…KRDI and NFVE…QCLD.

Belongs to the UPF0690 family.

This chain is UPF0690 protein C1orf52 homolog, found in Danio rerio (Zebrafish).